The sequence spans 610 residues: ATP-dependent zinc metalloprotease FtsH (610 aa).

The Cytoplasmic portion of the chain corresponds to 1–5 (MNRSN). A helical transmembrane segment spans residues 6–26 (IWNLLFTILIIVTLFWLARFF). The Periplasmic portion of the chain corresponds to 27–107 (YVENSPVSKL…SGERSGSSSF (81 aa)). Residues 108–128 (WINVLGTLIPTILFIVVWLFI) form a helical membrane-spanning segment. Topologically, residues 129-610 (MRSLSGRNNQ…LSEEFEKVVE (482 aa)) are cytoplasmic. ATP is bound by residues glycine 164, 204-208 (GTGKT), leucine 209, histidine 343, and glutamate 371. Residue histidine 423 participates in Zn(2+) binding. Glutamate 424 is a catalytic residue. Residues histidine 427 and aspartate 500 each contribute to the Zn(2+) site.

In the central section; belongs to the AAA ATPase family. The protein in the C-terminal section; belongs to the peptidase M41 family. As to quaternary structure, the isolated ADP-bound cytosolic domain forms a 6-fold symmetric protease disk and a 2-fold symmetric AAA ATPase ring. In the absence of nucleotide the AAA ATPase ring also forms symmetric hexamers. It depends on Zn(2+) as a cofactor.

It localises to the cell inner membrane. Acts as a processive, ATP-dependent zinc metallopeptidase for both cytoplasmic and membrane proteins. Plays a role in the quality control of integral membrane proteins. In Thermotoga maritima (strain ATCC 43589 / DSM 3109 / JCM 10099 / NBRC 100826 / MSB8), this protein is ATP-dependent zinc metalloprotease FtsH.